The chain runs to 337 residues: tRNA N6-adenosine threonylcarbamoyltransferase (337 aa).

Residues histidine 111 and histidine 115 each coordinate Fe cation. Substrate is bound by residues 134-138 (LVSGG), aspartate 167, glycine 180, and asparagine 272. Residue aspartate 300 coordinates Fe cation.

This sequence belongs to the KAE1 / TsaD family. Requires Fe(2+) as cofactor.

It localises to the cytoplasm. The catalysed reaction is L-threonylcarbamoyladenylate + adenosine(37) in tRNA = N(6)-L-threonylcarbamoyladenosine(37) in tRNA + AMP + H(+). Its function is as follows. Required for the formation of a threonylcarbamoyl group on adenosine at position 37 (t(6)A37) in tRNAs that read codons beginning with adenine. Is involved in the transfer of the threonylcarbamoyl moiety of threonylcarbamoyl-AMP (TC-AMP) to the N6 group of A37, together with TsaE and TsaB. TsaD likely plays a direct catalytic role in this reaction. This chain is tRNA N6-adenosine threonylcarbamoyltransferase, found in Yersinia enterocolitica serotype O:8 / biotype 1B (strain NCTC 13174 / 8081).